A 155-amino-acid chain; its full sequence is Eosinophil cationic protein (155 aa).

Residues 1-25 (MGLKLLESRLCLLLSLGLVLMLASC) form the signal peptide. Histidine 38 serves as the catalytic Proton acceptor. 4 disulfide bridges follow: cysteine 47-cysteine 106, cysteine 61-cysteine 118, cysteine 79-cysteine 133, and cysteine 86-cysteine 94. 62–66 (KDINT) contacts substrate. Residues asparagine 88 and asparagine 107 are each glycosylated (N-linked (GlcNAc...) asparagine). Histidine 150 functions as the Proton donor in the catalytic mechanism.

The protein belongs to the pancreatic ribonuclease family.

It is found in the cytoplasmic granule. In terms of biological role, cytotoxin and helminthotoxin with ribonuclease activity. Possesses a wide variety of biological activities. The sequence is that of Eosinophil cationic protein (Rnase3) from Rattus norvegicus (Rat).